The sequence spans 539 residues: Sodium/hydrogen exchanger 9B2 (539 aa).

The Cytoplasmic segment spans residues 1–94 (MEDSLFSVDK…ACPPQGCFSL (94 aa)). The chain crosses the membrane as a helical span at residues 95-112 (AITNVTMVILIWAVVWSI). The Extracellular segment spans residues 113 to 121 (TGPECLPGG). A helical membrane pass occupies residues 122-141 (NLFGILALLFSAALGGKLIS). Residues 142–152 (LIKIPSLPPLP) are Cytoplasmic-facing. A helical transmembrane segment spans residues 153–169 (PLLGMLLAGFLIRNIPV). Residues 170 to 179 (ITDQVQIHHK) are Extracellular-facing. A helical membrane pass occupies residues 180 to 197 (WSAALRNIALAIILVRAG). Residues 198 to 208 (LGLDPKALRKL) lie on the Cytoplasmic side of the membrane. Residues 209–235 (KAVCLRLSFGPCVVESCTAAVVSHFIM) form a helical membrane-spanning segment. The Extracellular portion of the chain corresponds to 236–241 (GFPLTW). The helical transmembrane segment at 242 to 250 (GFMLGFVLG) threads the bilayer. The Cytoplasmic segment spans residues 251-278 (AVSPAVVVPSMLILQKEGFGVDKGIPTL). The Na(+) site is built by Val-252, Gly-283, Asp-286, and Asp-287. A helical membrane pass occupies residues 279–298 (LMAAGSFDDVLAITGFNTCL). Residues 299–308 (GMAFSSGSTL) are Extracellular-facing. Residues 309-332 (NTIVRGVLEVVVGIAAGLLFGFFL) form a helical membrane-spanning segment. Residues 333 to 347 (HYFPSKDQENLKGKR) are Cytoplasmic-facing. A helical transmembrane segment spans residues 348-365 (SYLILALSVFAVFGSLYF). The Extracellular portion of the chain corresponds to 366–369 (GFPG). The helical transmembrane segment at 370 to 381 (SGGLCTLVMAFL) threads the bilayer. Residues 382–398 (AGIGWSTDKTVVEDIIA) are Cytoplasmic-facing. A helical membrane pass occupies residues 399-419 (VSWDIFQPLLFGLIGAEISVA). Residues 420-425 (SLKPET) lie on the Extracellular side of the membrane. Residues 426 to 448 (VGLCTATLIIALIIRICISFLMV) form a helical membrane-spanning segment. At 449–469 (CFSGFSLKEKIFISLAWMPKA) the chain is on the cytoplasmic side. A helical membrane pass occupies residues 470 to 481 (TVQAAIGSVALD). Over 482–494 (TARTLENKQFEDY) the chain is Extracellular. A helical transmembrane segment spans residues 495–517 (GMDVLTVAFLGILVTAPIGALVI). Residues 518-539 (GLTGPKMLEKSESRTVTEEGSV) lie on the Cytoplasmic side of the membrane.

The protein belongs to the monovalent cation:proton antiporter 1 (CPA1) transporter (TC 2.A.36) family. As to quaternary structure, homodimer; dimerization is essential for SLC9B2 activity. Lipids seem to play a role in the stabilization of the dimerization subdomain.

Its subcellular location is the cell membrane. The protein resides in the mitochondrion membrane. The protein localises to the endosome membrane. It localises to the recycling endosome membrane. It is found in the cytoplasmic vesicle. Its subcellular location is the secretory vesicle. The protein resides in the synaptic vesicle membrane. The protein localises to the basolateral cell membrane. It localises to the apical cell membrane. It catalyses the reaction Li(+)(out) + H(+)(in) = Li(+)(in) + H(+)(out). It carries out the reaction Li(+)(in) + Na(+)(out) = Li(+)(out) + Na(+)(in). The enzyme catalyses Na(+)(in) + H(+)(out) = Na(+)(out) + H(+)(in). Its activity is regulated as follows. Allosterically inhibited by the N-terminal domain. Inhibited by phloretin. Functionally, electroneutral Na(+) Li(+)/H(+) antiporter that extrudes Na(+) or Li(+) in exchange for external protons across the membrane. Uses the proton gradient/membrane potential to extrude sodium. Contributes to the regulation of intracellular pH and sodium homeostasis. Also able to mediate Na(+)/Li(+) antiporter activity in kidney. The polypeptide is Sodium/hydrogen exchanger 9B2 (slc9b2) (Xenopus tropicalis (Western clawed frog)).